The following is a 326-amino-acid chain: Thiamine thiazole synthase (326 aa).

Residues Cys-87, 108–109 (EA), Gly-116, and Val-181 each bind substrate. Position 215 is a 2,3-didehydroalanine (Cys) (Cys-215). Substrate is bound by residues Asp-217, His-232, Met-284, and 294 to 296 (RMG).

The protein belongs to the THI4 family. As to quaternary structure, homooctamer. The cofactor is Fe cation. In terms of processing, during the catalytic reaction, a sulfide is transferred from Cys-215 to a reaction intermediate, generating a dehydroalanine residue.

Its subcellular location is the cytoplasm. The protein localises to the nucleus. It catalyses the reaction [ADP-thiazole synthase]-L-cysteine + glycine + NAD(+) = [ADP-thiazole synthase]-dehydroalanine + ADP-5-ethyl-4-methylthiazole-2-carboxylate + nicotinamide + 3 H2O + 2 H(+). Functionally, involved in biosynthesis of the thiamine precursor thiazole. Catalyzes the conversion of NAD and glycine to adenosine diphosphate 5-(2-hydroxyethyl)-4-methylthiazole-2-carboxylic acid (ADT), an adenylated thiazole intermediate. The reaction includes an iron-dependent sulfide transfer from a conserved cysteine residue of the protein to a thiazole intermediate. The enzyme can only undergo a single turnover, which suggests it is a suicide enzyme. May have additional roles in adaptation to various stress conditions and in DNA damage tolerance. This Sclerotinia sclerotiorum (strain ATCC 18683 / 1980 / Ss-1) (White mold) protein is Thiamine thiazole synthase.